A 374-amino-acid chain; its full sequence is GDSL esterase/lipase At1g71250 (374 aa).

The first 28 residues, 1–28 (MNTNRKKMKVHIGGYVLILALTVSVILQ), serve as a signal peptide directing secretion. Ser-48 functions as the Nucleophile in the catalytic mechanism. Asn-162 is a glycosylation site (N-linked (GlcNAc...) asparagine). Residues Asp-338 and His-341 contribute to the active site.

This sequence belongs to the 'GDSL' lipolytic enzyme family.

The protein localises to the secreted. The sequence is that of GDSL esterase/lipase At1g71250 from Arabidopsis thaliana (Mouse-ear cress).